Reading from the N-terminus, the 667-residue chain is MKTNRAYSTLEVKALDDEKRVITGIASTPSPDRMQDVVEPKGAQFKLPIPFLWQHNHDEPIGHVTEAKVTQKGIEVSVQLTQVEEPGKLKDRLDEAWQSIKSGLVRGLSIGFSAKEFEQIPGSWGLRFLSWEWFELSAVTIPANAEATITSVKSIDREQRAALGIKSVPVVRVTPAGASAIKTKTIKVPKPQEGNDMKTTAEQIAEFEATRVTKAAEMEAIMTKAAEAGETLDAEQSEQFDTLEAEIAAIDKHIGRLKQMQKAQAANAKPVTEEAGAQRMANVKALDFKEVQVRAKNTQKLEPGIAFARAAKCLALGHLEHRDAIGIAKSLYDGQDSIIAATQRLVTKAAVAAATTSDATWAGPLVGDETSVFADFVEYLRPQTILGRFGTNGIPSLRRVPFRVPLIGQTSGGDGYWVGEGQAKPLTKFDFERKTLEPLKVANIAVATMEVIRDSSPSADVIIRDQLAAALRERLDIDFIDPAKAAVAGVSPASILNGVAGIPSSGNTADDVRADIRALFNAFIAANNAPTSGVWLMPATTALALSLMQNPLGQAEFPGISMTGGTLFGLPVIVSEYIPTASAGAVVALVNASDIYLGDEGGVDLSMSTEASLQMDNAPDNPTTASTVLVSLWQRNLVGFRAERAINWARRRASAVAYLTGVNWGAA.

A prohead protease activity region spans residues 8–154 (STLEVKALDD…AEATITSVKS (147 aa)).

In terms of processing, the prohead protease may be autocatalytically cleaved giving rise to the mature capsid protein.

Its subcellular location is the virion. Its function is as follows. The C-terminus contains the capsid protein. The N-terminal region may act as a prohead protease. In Pseudomonas aeruginosa, this protein is Capsid polyprotein.